A 442-amino-acid polypeptide reads, in one-letter code: Putative arsenical pump membrane protein (442 aa).

Transmembrane regions (helical) follow at residues 22–42 (IPAT…LADL), 56–76 (ILAT…YWVA), 85–105 (GSGI…TIFL), 107–127 (NDGS…YLGL), 136–156 (LLSG…SNIV), 174–194 (MMFV…FMFF), 250–270 (LFAA…GSFI), 294–314 (IFIF…IGFT), 328–347 (SLAH…SNLF), 378–398 (IIGS…TLIW), and 419–439 (IIII…WISW).

This sequence belongs to the ArsB family.

Its subcellular location is the cell membrane. This chain is Putative arsenical pump membrane protein (ywrK), found in Bacillus subtilis (strain 168).